We begin with the raw amino-acid sequence, 199 residues long: MKKIILATSNKNKIIEFKKILSELNINTISQKDLGICSIEENKSTFLENALIKARNASKYGFPALSDDSGLIIKTLNGEPGVYSSRFSGNQSNDIKNINMVLKKMLPFKKMDRQACMHCVLIYIRNPNDPIPIISSGTIYGKISNSISKINFGFGYDSIFFLPKKKKTISELTLEEKIKISHRGIAMKKMIKFLKNEKY.

Residue 8 to 13 (TSNKNK) coordinates substrate. Positions 40 and 68 each coordinate Mg(2+). Aspartate 68 serves as the catalytic Proton acceptor. Residues serine 69, 154 to 157 (FGYD), lysine 177, and 182 to 183 (HR) contribute to the substrate site.

Belongs to the HAM1 NTPase family. In terms of assembly, homodimer. Mg(2+) serves as cofactor.

The enzyme catalyses XTP + H2O = XMP + diphosphate + H(+). It catalyses the reaction dITP + H2O = dIMP + diphosphate + H(+). It carries out the reaction ITP + H2O = IMP + diphosphate + H(+). Functionally, pyrophosphatase that catalyzes the hydrolysis of nucleoside triphosphates to their monophosphate derivatives, with a high preference for the non-canonical purine nucleotides XTP (xanthosine triphosphate), dITP (deoxyinosine triphosphate) and ITP. Seems to function as a house-cleaning enzyme that removes non-canonical purine nucleotides from the nucleotide pool, thus preventing their incorporation into DNA/RNA and avoiding chromosomal lesions. In Wigglesworthia glossinidia brevipalpis, this protein is dITP/XTP pyrophosphatase.